Reading from the N-terminus, the 256-residue chain is Hydroxyacylglutathione hydrolase (256 aa).

Zn(2+)-binding residues include histidine 55, histidine 57, aspartate 59, histidine 60, histidine 113, aspartate 130, and histidine 168.

Belongs to the metallo-beta-lactamase superfamily. Glyoxalase II family. As to quaternary structure, monomer. Zn(2+) is required as a cofactor.

It catalyses the reaction an S-(2-hydroxyacyl)glutathione + H2O = a 2-hydroxy carboxylate + glutathione + H(+). It participates in secondary metabolite metabolism; methylglyoxal degradation; (R)-lactate from methylglyoxal: step 2/2. Its function is as follows. Thiolesterase that catalyzes the hydrolysis of S-D-lactoyl-glutathione to form glutathione and D-lactic acid. This chain is Hydroxyacylglutathione hydrolase, found in Psychromonas ingrahamii (strain DSM 17664 / CCUG 51855 / 37).